The chain runs to 21 residues: Trypsin (21 aa).

The protein belongs to the peptidase S1 family.

It is found in the secreted. The protein resides in the extracellular space. The catalysed reaction is Preferential cleavage: Arg-|-Xaa, Lys-|-Xaa.. This chain is Trypsin, found in Apis mellifera scutellata (Africanized honey bee).